The chain runs to 49 residues: Large ribosomal subunit protein bL33B (49 aa).

This sequence belongs to the bacterial ribosomal protein bL33 family.

The sequence is that of Large ribosomal subunit protein bL33B from Exiguobacterium sibiricum (strain DSM 17290 / CCUG 55495 / CIP 109462 / JCM 13490 / 255-15).